A 134-amino-acid chain; its full sequence is Large ribosomal subunit protein uL16c (134 aa).

A disordered region spans residues Met-1–His-22.

It belongs to the universal ribosomal protein uL16 family. As to quaternary structure, part of the 50S ribosomal subunit.

The protein resides in the plastid. Its subcellular location is the chloroplast. The polypeptide is Large ribosomal subunit protein uL16c (Nicotiana tomentosiformis (Tobacco)).